A 357-amino-acid polypeptide reads, in one-letter code: Dihydroorotate dehydrogenase (quinone) (357 aa).

FMN is bound by residues 65 to 69 (AGLDK) and Thr-89. Lys-69 contributes to the substrate binding site. 114-118 (NRFGF) serves as a coordination point for substrate. Asn-156 and Asn-189 together coordinate FMN. A substrate-binding site is contributed by Asn-189. Ser-192 (nucleophile) is an active-site residue. Asn-194 is a binding site for substrate. The FMN site is built by Lys-234 and Thr-262. Residue 263–264 (NT) participates in substrate binding. FMN-binding positions include Gly-285, Gly-314, and 335-336 (YT).

This sequence belongs to the dihydroorotate dehydrogenase family. Type 2 subfamily. In terms of assembly, monomer. FMN serves as cofactor.

It is found in the cell membrane. It carries out the reaction (S)-dihydroorotate + a quinone = orotate + a quinol. It functions in the pathway pyrimidine metabolism; UMP biosynthesis via de novo pathway; orotate from (S)-dihydroorotate (quinone route): step 1/1. Functionally, catalyzes the conversion of dihydroorotate to orotate with quinone as electron acceptor. This Albidiferax ferrireducens (strain ATCC BAA-621 / DSM 15236 / T118) (Rhodoferax ferrireducens) protein is Dihydroorotate dehydrogenase (quinone).